We begin with the raw amino-acid sequence, 109 residues long: Nucleoid-associated protein HD_0326 (109 aa).

Belongs to the YbaB/EbfC family. Homodimer.

The protein resides in the cytoplasm. The protein localises to the nucleoid. In terms of biological role, binds to DNA and alters its conformation. May be involved in regulation of gene expression, nucleoid organization and DNA protection. This Haemophilus ducreyi (strain 35000HP / ATCC 700724) protein is Nucleoid-associated protein HD_0326.